The following is a 320-amino-acid chain: Ferrochelatase (320 aa).

The Fe cation site is built by H194 and E275.

This sequence belongs to the ferrochelatase family. In terms of assembly, monomer.

It localises to the cytoplasm. It carries out the reaction heme b + 2 H(+) = protoporphyrin IX + Fe(2+). The protein operates within porphyrin-containing compound metabolism; protoheme biosynthesis; protoheme from protoporphyrin-IX: step 1/1. In terms of biological role, catalyzes the ferrous insertion into protoporphyrin IX. This is Ferrochelatase from Escherichia coli (strain 55989 / EAEC).